The primary structure comprises 349 residues: Transmembrane protein 59-like (349 aa).

The first 22 residues, 1-22 (MDSVALMPLLLLLLLQPPPATP), serve as a signal peptide directing secretion. Asn100 carries an N-linked (GlcNAc...) asparagine glycan. A helical transmembrane segment spans residues 276 to 296 (ILACCLFLSVLVMLWLSCSTL). The Microbody targeting signal motif lies at 347 to 349 (TKL).

This sequence belongs to the TMEM59 family.

Its subcellular location is the golgi apparatus membrane. In terms of biological role, modulates the O-glycosylation and complex N-glycosylation steps occurring during the Golgi maturation of APP. Inhibits APP transport to the cell surface and further shedding. The protein is Transmembrane protein 59-like (TMEM59L) of Bos taurus (Bovine).